The primary structure comprises 148 residues: 3-dehydroquinate dehydratase (148 aa).

The active-site Proton acceptor is Tyr-24. The substrate site is built by Asn-80, His-86, and Asp-93. His-106 (proton donor) is an active-site residue. Substrate contacts are provided by residues Ile-107–Ser-108 and Arg-117.

Belongs to the type-II 3-dehydroquinase family. Homododecamer.

It carries out the reaction 3-dehydroquinate = 3-dehydroshikimate + H2O. It participates in metabolic intermediate biosynthesis; chorismate biosynthesis; chorismate from D-erythrose 4-phosphate and phosphoenolpyruvate: step 3/7. Functionally, catalyzes a trans-dehydration via an enolate intermediate. This chain is 3-dehydroquinate dehydratase, found in Acidovorax sp. (strain JS42).